Reading from the N-terminus, the 338-residue chain is Ketol-acid reductoisomerase (NADP(+)) (338 aa).

The 181-residue stretch at 1–181 (MKVFYDNDAD…GGTRAGVIET (181 aa)) folds into the KARI N-terminal Rossmann domain. NADP(+)-binding positions include 24–27 (YGSQ), R47, S50, S52, and 82–85 (DEGQ). H107 is an active-site residue. G133 contacts NADP(+). Residues 182–327 (SFREETETDL…SKLRSMMTWI (146 aa)) form the KARI C-terminal knotted domain. Mg(2+)-binding residues include D190, E194, E226, and E230. S251 lines the substrate pocket.

This sequence belongs to the ketol-acid reductoisomerase family. Requires Mg(2+) as cofactor.

It carries out the reaction (2R)-2,3-dihydroxy-3-methylbutanoate + NADP(+) = (2S)-2-acetolactate + NADPH + H(+). The enzyme catalyses (2R,3R)-2,3-dihydroxy-3-methylpentanoate + NADP(+) = (S)-2-ethyl-2-hydroxy-3-oxobutanoate + NADPH + H(+). Its pathway is amino-acid biosynthesis; L-isoleucine biosynthesis; L-isoleucine from 2-oxobutanoate: step 2/4. It participates in amino-acid biosynthesis; L-valine biosynthesis; L-valine from pyruvate: step 2/4. Functionally, involved in the biosynthesis of branched-chain amino acids (BCAA). Catalyzes an alkyl-migration followed by a ketol-acid reduction of (S)-2-acetolactate (S2AL) to yield (R)-2,3-dihydroxy-isovalerate. In the isomerase reaction, S2AL is rearranged via a Mg-dependent methyl migration to produce 3-hydroxy-3-methyl-2-ketobutyrate (HMKB). In the reductase reaction, this 2-ketoacid undergoes a metal-dependent reduction by NADPH to yield (R)-2,3-dihydroxy-isovalerate. This is Ketol-acid reductoisomerase (NADP(+)) from Acidithiobacillus ferrooxidans (strain ATCC 23270 / DSM 14882 / CIP 104768 / NCIMB 8455) (Ferrobacillus ferrooxidans (strain ATCC 23270)).